Reading from the N-terminus, the 331-residue chain is MAKLFYDSDADLGLLQDKTVAIIGYGSQGHAHALNLKDSGIKVVVGLYEGSRSASKATSDGLEVLSVAEASERADWIMILLPDEFQKDVYSKEIAPHLKAGKILSFAHGFNIRFELIKPPEFVDVVMIAPKGPGHTVRWEYQNGQGVPALFAIEQDSSGNARALAMAYAKGIGGTRAGILETNFKEETETDLFGEQAVLCGGLSELVKAGFETLVEAGYQPELAYFECLHEVKLIVDLMVKGGLTAMRDSISNTAEYGDYVSGPRLITKETKEEMKNILADIQDGTFAKNFVKECDEGKPEMKRIRKKDSELPIEKVGKTLRSMFSWLKSD.

The 181-residue stretch at 2-182 (AKLFYDSDAD…GGTRAGILET (181 aa)) folds into the KARI N-terminal Rossmann domain. Residues 25 to 28 (YGSQ), Ser-51, Ser-53, and 83 to 86 (DEFQ) contribute to the NADP(+) site. His-108 is an active-site residue. Gly-134 is an NADP(+) binding site. One can recognise a KARI C-terminal knotted domain in the interval 183–328 (NFKEETETDL…KTLRSMFSWL (146 aa)). 4 residues coordinate Mg(2+): Asp-191, Glu-195, Glu-227, and Glu-231. A substrate-binding site is contributed by Ser-252.

It belongs to the ketol-acid reductoisomerase family. It depends on Mg(2+) as a cofactor.

The catalysed reaction is (2R)-2,3-dihydroxy-3-methylbutanoate + NADP(+) = (2S)-2-acetolactate + NADPH + H(+). The enzyme catalyses (2R,3R)-2,3-dihydroxy-3-methylpentanoate + NADP(+) = (S)-2-ethyl-2-hydroxy-3-oxobutanoate + NADPH + H(+). It functions in the pathway amino-acid biosynthesis; L-isoleucine biosynthesis; L-isoleucine from 2-oxobutanoate: step 2/4. The protein operates within amino-acid biosynthesis; L-valine biosynthesis; L-valine from pyruvate: step 2/4. Functionally, involved in the biosynthesis of branched-chain amino acids (BCAA). Catalyzes an alkyl-migration followed by a ketol-acid reduction of (S)-2-acetolactate (S2AL) to yield (R)-2,3-dihydroxy-isovalerate. In the isomerase reaction, S2AL is rearranged via a Mg-dependent methyl migration to produce 3-hydroxy-3-methyl-2-ketobutyrate (HMKB). In the reductase reaction, this 2-ketoacid undergoes a metal-dependent reduction by NADPH to yield (R)-2,3-dihydroxy-isovalerate. The chain is Ketol-acid reductoisomerase (NADP(+)) from Prochlorococcus marinus (strain NATL2A).